The chain runs to 365 residues: Aminomethyltransferase (365 aa).

It belongs to the GcvT family. In terms of assembly, the glycine cleavage system is composed of four proteins: P, T, L and H.

It carries out the reaction N(6)-[(R)-S(8)-aminomethyldihydrolipoyl]-L-lysyl-[protein] + (6S)-5,6,7,8-tetrahydrofolate = N(6)-[(R)-dihydrolipoyl]-L-lysyl-[protein] + (6R)-5,10-methylene-5,6,7,8-tetrahydrofolate + NH4(+). Its function is as follows. The glycine cleavage system catalyzes the degradation of glycine. In Synechococcus sp. (strain CC9902), this protein is Aminomethyltransferase.